The chain runs to 873 residues: F-box only protein 41 (873 aa).

The segment covering 85–97 has biased composition (polar residues); sequence ESTSFQGKEQATG. Disordered stretches follow at residues 85–110, 163–193, and 345–540; these read ESTSFQGKEQATGPSPAGPHLLHHHH, SSACSTPPPGPGPGPCSGPSSASPASPSPAD, and SSSC…PSRS. Pro residues predominate over residues 168-178; the sequence is TPPPGPGPGPC. Low complexity predominate over residues 179-192; the sequence is SGPSSASPASPSPA. A coiled-coil region spans residues 207–349; it reads ALEKLEVDRR…QLQVISSSCG (143 aa). Gly residues predominate over residues 357–371; sequence GRGGGGSASGPGVRG. Omega-N-methylarginine is present on R358. Composition is skewed to polar residues over residues 384 to 414 and 442 to 456; these read VPSTYAVSRHGSSPSTGASSRVPAASQSSGC and AQATNGGSERSQAPR. Position 476 is a phosphoserine (S476). Position 477 is a phosphothreonine (T477). An F-box domain is found at 548 to 592; the sequence is ILKMRAALFCIFTYLDTRTLLHAAEVCRDWRFVARHPAVWTRVLL. S760 carries the post-translational modification Phosphoserine.

Directly interacts with SKP1 and CUL1.

Its function is as follows. Substrate-recognition component of the SCF (SKP1-CUL1-F-box protein)-type E3 ubiquitin ligase complex. In Mus musculus (Mouse), this protein is F-box only protein 41 (Fbxo41).